A 634-amino-acid chain; its full sequence is DNA-directed RNA polymerase subunit gamma (634 aa).

4 residues coordinate Zn(2+): Cys-74, Cys-76, Cys-89, and Cys-92. Residues Asp-471, Asp-473, and Asp-475 each coordinate Mg(2+).

It belongs to the RNA polymerase beta' chain family. RpoC1 subfamily. As to quaternary structure, in cyanobacteria the RNAP catalytic core is composed of 2 alpha, 1 beta, 1 beta', 1 gamma and 1 omega subunit. When a sigma factor is associated with the core the holoenzyme is formed, which can initiate transcription. The cofactor is Mg(2+). Zn(2+) is required as a cofactor.

The catalysed reaction is RNA(n) + a ribonucleoside 5'-triphosphate = RNA(n+1) + diphosphate. Its function is as follows. DNA-dependent RNA polymerase catalyzes the transcription of DNA into RNA using the four ribonucleoside triphosphates as substrates. The chain is DNA-directed RNA polymerase subunit gamma from Prochlorococcus marinus (strain MIT 9312).